Reading from the N-terminus, the 314-residue chain is ATP synthase gamma chain (314 aa).

It belongs to the ATPase gamma chain family. F-type ATPases have 2 components, CF(1) - the catalytic core - and CF(0) - the membrane proton channel. CF(1) has five subunits: alpha(3), beta(3), gamma(1), delta(1), epsilon(1). CF(0) has three main subunits: a, b and c.

It localises to the cell inner membrane. Produces ATP from ADP in the presence of a proton gradient across the membrane. The gamma chain is believed to be important in regulating ATPase activity and the flow of protons through the CF(0) complex. The protein is ATP synthase gamma chain of Gloeobacter violaceus (strain ATCC 29082 / PCC 7421).